A 581-amino-acid chain; its full sequence is Proline--tRNA ligase (581 aa).

Belongs to the class-II aminoacyl-tRNA synthetase family. ProS type 1 subfamily. As to quaternary structure, homodimer.

It is found in the cytoplasm. The enzyme catalyses tRNA(Pro) + L-proline + ATP = L-prolyl-tRNA(Pro) + AMP + diphosphate. Functionally, catalyzes the attachment of proline to tRNA(Pro) in a two-step reaction: proline is first activated by ATP to form Pro-AMP and then transferred to the acceptor end of tRNA(Pro). As ProRS can inadvertently accommodate and process non-cognate amino acids such as alanine and cysteine, to avoid such errors it has two additional distinct editing activities against alanine. One activity is designated as 'pretransfer' editing and involves the tRNA(Pro)-independent hydrolysis of activated Ala-AMP. The other activity is designated 'posttransfer' editing and involves deacylation of mischarged Ala-tRNA(Pro). The misacylated Cys-tRNA(Pro) is not edited by ProRS. This chain is Proline--tRNA ligase, found in Blochmanniella pennsylvanica (strain BPEN).